Here is a 358-residue protein sequence, read N- to C-terminus: tRNA-specific 2-thiouridylase MnmA (358 aa).

Residues 8–15 (GLSGGVDS) and methionine 34 each bind ATP. The segment at 94 to 96 (NPD) is interaction with target base in tRNA. The Nucleophile role is filled by cysteine 99. Residues cysteine 99 and cysteine 196 are joined by a disulfide bond. Glycine 123 serves as a coordination point for ATP. Residues 146-148 (KDQ) are interaction with tRNA. Cysteine 196 serves as the catalytic Cysteine persulfide intermediate. Residues 308-309 (RY) are interaction with tRNA.

This sequence belongs to the MnmA/TRMU family.

The protein localises to the cytoplasm. The enzyme catalyses S-sulfanyl-L-cysteinyl-[protein] + uridine(34) in tRNA + AH2 + ATP = 2-thiouridine(34) in tRNA + L-cysteinyl-[protein] + A + AMP + diphosphate + H(+). In terms of biological role, catalyzes the 2-thiolation of uridine at the wobble position (U34) of tRNA, leading to the formation of s(2)U34. This Thiobacillus denitrificans (strain ATCC 25259 / T1) protein is tRNA-specific 2-thiouridylase MnmA.